Consider the following 1405-residue polypeptide: DNA-directed RNA polymerase subunit beta' (1405 aa).

Positions 70, 72, 85, and 88 each coordinate Zn(2+). The Mg(2+) site is built by D460, D462, and D464. C814, C888, C895, and C898 together coordinate Zn(2+).

Belongs to the RNA polymerase beta' chain family. In terms of assembly, the RNAP catalytic core consists of 2 alpha, 1 beta, 1 beta' and 1 omega subunit. When a sigma factor is associated with the core the holoenzyme is formed, which can initiate transcription. Mg(2+) is required as a cofactor. Requires Zn(2+) as cofactor.

It carries out the reaction RNA(n) + a ribonucleoside 5'-triphosphate = RNA(n+1) + diphosphate. In terms of biological role, DNA-dependent RNA polymerase catalyzes the transcription of DNA into RNA using the four ribonucleoside triphosphates as substrates. The chain is DNA-directed RNA polymerase subunit beta' from Shewanella oneidensis (strain ATCC 700550 / JCM 31522 / CIP 106686 / LMG 19005 / NCIMB 14063 / MR-1).